A 180-amino-acid chain; its full sequence is NAD(P)H-quinone oxidoreductase subunit I, chloroplastic (180 aa).

2 4Fe-4S ferredoxin-type domains span residues 55-84 (GRIH…VDWR) and 95-124 (LNYS…MTEE). [4Fe-4S] cluster-binding residues include Cys64, Cys67, Cys70, Cys74, Cys104, Cys107, Cys110, and Cys114.

This sequence belongs to the complex I 23 kDa subunit family. In terms of assembly, NDH is composed of at least 16 different subunits, 5 of which are encoded in the nucleus. [4Fe-4S] cluster is required as a cofactor.

The protein localises to the plastid. Its subcellular location is the chloroplast thylakoid membrane. It carries out the reaction a plastoquinone + NADH + (n+1) H(+)(in) = a plastoquinol + NAD(+) + n H(+)(out). The catalysed reaction is a plastoquinone + NADPH + (n+1) H(+)(in) = a plastoquinol + NADP(+) + n H(+)(out). Functionally, NDH shuttles electrons from NAD(P)H:plastoquinone, via FMN and iron-sulfur (Fe-S) centers, to quinones in the photosynthetic chain and possibly in a chloroplast respiratory chain. The immediate electron acceptor for the enzyme in this species is believed to be plastoquinone. Couples the redox reaction to proton translocation, and thus conserves the redox energy in a proton gradient. This Amborella trichopoda protein is NAD(P)H-quinone oxidoreductase subunit I, chloroplastic.